The chain runs to 354 residues: Protein angel (354 aa).

The segment at 22-59 (VSSQAKGASGKRKQKAKEMESSHDRNRRWTSLGNQAEG) is disordered.

Belongs to the CCR4/nocturin family. In terms of tissue distribution, ubiquitously expressed in embryos.

This chain is Protein angel (angel), found in Drosophila melanogaster (Fruit fly).